We begin with the raw amino-acid sequence, 340 residues long: MILSIESSCDDSSLALTRIKDAKLIAHFKISQEKHHSSYGGVVPELASRLHAENLPLLLERIKISLNKDFSKIKAIAITNQPGLSVTLIEGLMMAKALSLSLNLPLILEDHLRGHVYSLFINEKQTCMPLSALLVSGGHSLILEARDYEDIKIVATSLDDSFGESFDKVSKMLDLGYPGGPIVEKLALDYAHQNEPLMFPIPLKNSQNLAFSFSGLKNAVRLEVEKNAPNLNEAIKQKISYHFQSAAIEHLIQQTKRYFKIKRPKIFGIVGGASQNLALRKAFENLCDEFDCKLVLAPLEFCNDNAAMIGRSSLEAYQQKRFVPLEKANISPRTLLKSFE.

His111 and His115 together coordinate Fe cation. Substrate is bound by residues 134–138 (LVSGG), Asp167, Gly180, and Asn276. Residue Asp304 participates in Fe cation binding.

Belongs to the KAE1 / TsaD family. Fe(2+) serves as cofactor.

The protein localises to the cytoplasm. The catalysed reaction is L-threonylcarbamoyladenylate + adenosine(37) in tRNA = N(6)-L-threonylcarbamoyladenosine(37) in tRNA + AMP + H(+). Functionally, required for the formation of a threonylcarbamoyl group on adenosine at position 37 (t(6)A37) in tRNAs that read codons beginning with adenine. Is involved in the transfer of the threonylcarbamoyl moiety of threonylcarbamoyl-AMP (TC-AMP) to the N6 group of A37, together with TsaE and TsaB. TsaD likely plays a direct catalytic role in this reaction. In Helicobacter pylori (strain Shi470), this protein is tRNA N6-adenosine threonylcarbamoyltransferase.